Here is a 358-residue protein sequence, read N- to C-terminus: Heat-inducible transcription repressor HrcA (358 aa).

Belongs to the HrcA family.

Negative regulator of class I heat shock genes (grpE-dnaK-dnaJ and groELS operons). Prevents heat-shock induction of these operons. The sequence is that of Heat-inducible transcription repressor HrcA from Caulobacter vibrioides (strain ATCC 19089 / CIP 103742 / CB 15) (Caulobacter crescentus).